A 492-amino-acid chain; its full sequence is Probable malate:quinone oxidoreductase 1 (492 aa).

Belongs to the MQO family. Requires FAD as cofactor.

The catalysed reaction is (S)-malate + a quinone = a quinol + oxaloacetate. Its pathway is carbohydrate metabolism; tricarboxylic acid cycle; oxaloacetate from (S)-malate (quinone route): step 1/1. The chain is Probable malate:quinone oxidoreductase 1 from Staphylococcus epidermidis (strain ATCC 12228 / FDA PCI 1200).